A 754-amino-acid polypeptide reads, in one-letter code: MKSWISISFLCMLFPLSNGQLGSSGQVTLQGAQISQATQSLQGTAPTSQYPQGGTQISQGGAQATQNYQGVAQGTQISQGLTQGAQISQGGGQGISQGATQGTQFSQGTVPSGQFFQNIVQGTQAVLSGAQHSQAGAQGSQFPQSAAHTAQHHQGTAQPAQSGTHAILKEMEKSLAEFKAYVEYLENMVYKERMKYPSPYIQNFTASPSNFTYTTFENDVDMRLSSMERISSELVKQMVNCPRGPVPPPPPQSVMVQSDTVDNSSNIYVSWDPPYFEGKPLTGENMHYKVYFSPSDQYGKATGGEFIFRICDANFTQASVTDLNPRSFYSIQVAATLCEAIESEGTSTSVKTPDLIPSAPLNLKLEGTKPNAFAVSWDPPTVKGTLTNYTIYATEESGKATMVTIDPKLTSYALYNLYEGTMYTIRIAASSDNGMSPKSEPLEVTTDKFIPMAPRNVRAIDNNLTSVTLEWDAPLPGRGMIRGYRINYTLDFTDYEEMLISDPSITTATITNLTPATEYYFQVFARTMKRLGYGSHLIMNKTKMDVPSEPMSVVHRIMDNGLQRIQVSWQPPENTYGPIIDYIIHWGVRGGATRKEFLTPYVLSWTSDFLDDNANHDFKLFAQNVVGIGKPVAFSVKTLPKPQILVPNVRVKRETSKNNITSLTVTWGSPKVPVDGFFVLYRKYEGVYSDRWKFIEIPKPNARGTTITVTQENVPYVVVCKGFKRQKKPTSNLSSQQFSFPGQQVGQQQSNPWI.

Positions 1 to 19 (MKSWISISFLCMLFPLSNG) are cleaved as a signal peptide. Disordered regions lie at residues 40–61 (SLQGTAPTSQYPQGGTQISQGG), 85–106 (AQISQGGGQGISQGATQGTQFS), and 130–163 (AQHSQAGAQGSQFPQSAAHTAQHHQGTAQPAQSG). The span at 130–161 (AQHSQAGAQGSQFPQSAAHTAQHHQGTAQPAQ) shows a compositional bias: low complexity. Fibronectin type-III domains are found at residues 250–355 (PPQS…TPDL), 359–449 (APLN…TDKF), 453–545 (APRN…TKMD), 549–642 (EPMS…LPKP), and 645–742 (LVPN…SFPG). Positions 731–754 (SNLSSQQFSFPGQQVGQQQSNPWI) are disordered.

Prismatic layer of shell (at protein level). Expressed primarily in the mantle with highest level in the outer epithelium of the mantle edge and lower level in the mantle pallium.

The protein resides in the secreted. The protein is Fibronectin type III domain-containing protein 1 of Margaritifera margaritifera (Freshwater pearl mussel).